Consider the following 440-residue polypeptide: Phosphoglycerate kinase, glycosomal (440 aa).

Residues Val23, Asp24, Phe25, Asn26, Arg39, Ser61, His62, Gly64, Arg65, Arg135, His171, and Arg172 each contribute to the (2R)-3-phosphoglycerate site. CDP is bound at residue Gly217. Ala218 lines the ADP pocket. AMP is bound by residues Ala218 and Lys219. Residue Ala218 coordinates ATP. Ala218 is a binding site for Mg(2+). Lys219 contacts (2R)-3-phosphoglycerate. Position 222 (Asp222) interacts with CDP. Residue Asp222 coordinates Mg(2+). ADP-binding residues include Lys223 and Gly241. Lys223 contacts AMP. Gly241 is a binding site for CDP. The AMP site is built by Ala242 and Ala314. Positions 242 and 314 each coordinate ATP. ADP-binding residues include Ala314 and Asn338. CDP-binding residues include Gly339 and Phe344. ADP-binding residues include Phe344, Glu345, Asp377, and Ser378. An AMP-binding site is contributed by Glu345. Residues Asp377 and Ser378 each coordinate ATP. Mg(2+) is bound at residue Asp377.

It belongs to the phosphoglycerate kinase family. As to quaternary structure, monomer. Mg(2+) is required as a cofactor.

It localises to the glycosome. The catalysed reaction is (2R)-3-phosphoglycerate + ATP = (2R)-3-phospho-glyceroyl phosphate + ADP. The protein operates within carbohydrate degradation; glycolysis; pyruvate from D-glyceraldehyde 3-phosphate: step 2/5. The protein is Phosphoglycerate kinase, glycosomal of Trypanosoma brucei brucei.